The sequence spans 302 residues: N-acetylmuramic acid 6-phosphate etherase (302 aa).

The SIS domain maps to 58 to 221 (IGESFLNGGR…STGAMVKTGK (164 aa)). The active-site Proton donor is glutamate 86. Glutamate 117 is a catalytic residue.

The protein belongs to the GCKR-like family. MurNAc-6-P etherase subfamily. As to quaternary structure, homodimer.

The catalysed reaction is N-acetyl-D-muramate 6-phosphate + H2O = N-acetyl-D-glucosamine 6-phosphate + (R)-lactate. It functions in the pathway amino-sugar metabolism; N-acetylmuramate degradation. Functionally, specifically catalyzes the cleavage of the D-lactyl ether substituent of MurNAc 6-phosphate, producing GlcNAc 6-phosphate and D-lactate. In Clostridium botulinum (strain Langeland / NCTC 10281 / Type F), this protein is N-acetylmuramic acid 6-phosphate etherase.